We begin with the raw amino-acid sequence, 452 residues long: Bifunctional protein GlmU (452 aa).

Residues 1–226 (MSLTTVILAA…PMEVEGANNR (226 aa)) are pyrophosphorylase. Residues 8–11 (LAAG), K22, Q73, 78–79 (GT), 100–102 (YGD), G137, E151, N166, and N224 contribute to the UDP-N-acetyl-alpha-D-glucosamine site. Residue D102 participates in Mg(2+) binding. Mg(2+) is bound at residue N224. The linker stretch occupies residues 227–247 (IQLAGLERAYQAWQAQELMLN). Residues 248 to 452 (GATLADPARI…LDGWKRPVKK (205 aa)) form an N-acetyltransferase region. UDP-N-acetyl-alpha-D-glucosamine-binding residues include R330 and K348. The active-site Proton acceptor is H360. Residues Y363 and N374 each coordinate UDP-N-acetyl-alpha-D-glucosamine. Acetyl-CoA is bound by residues A377, 383 to 384 (NY), S402, A420, and R437.

It in the N-terminal section; belongs to the N-acetylglucosamine-1-phosphate uridyltransferase family. This sequence in the C-terminal section; belongs to the transferase hexapeptide repeat family. As to quaternary structure, homotrimer. The cofactor is Mg(2+).

The protein localises to the cytoplasm. It catalyses the reaction alpha-D-glucosamine 1-phosphate + acetyl-CoA = N-acetyl-alpha-D-glucosamine 1-phosphate + CoA + H(+). The enzyme catalyses N-acetyl-alpha-D-glucosamine 1-phosphate + UTP + H(+) = UDP-N-acetyl-alpha-D-glucosamine + diphosphate. Its pathway is nucleotide-sugar biosynthesis; UDP-N-acetyl-alpha-D-glucosamine biosynthesis; N-acetyl-alpha-D-glucosamine 1-phosphate from alpha-D-glucosamine 6-phosphate (route II): step 2/2. It participates in nucleotide-sugar biosynthesis; UDP-N-acetyl-alpha-D-glucosamine biosynthesis; UDP-N-acetyl-alpha-D-glucosamine from N-acetyl-alpha-D-glucosamine 1-phosphate: step 1/1. The protein operates within bacterial outer membrane biogenesis; LPS lipid A biosynthesis. In terms of biological role, catalyzes the last two sequential reactions in the de novo biosynthetic pathway for UDP-N-acetylglucosamine (UDP-GlcNAc). The C-terminal domain catalyzes the transfer of acetyl group from acetyl coenzyme A to glucosamine-1-phosphate (GlcN-1-P) to produce N-acetylglucosamine-1-phosphate (GlcNAc-1-P), which is converted into UDP-GlcNAc by the transfer of uridine 5-monophosphate (from uridine 5-triphosphate), a reaction catalyzed by the N-terminal domain. The chain is Bifunctional protein GlmU from Pseudoalteromonas translucida (strain TAC 125).